We begin with the raw amino-acid sequence, 1213 residues long: DNA-directed RNA polymerase subunit beta (1213 aa).

The segment at 1169 to 1213 is disordered; that stretch reads SRMAEEQEKKKLAEETGKSGDKKENKKDADKPVAPADESDDKVSK. A compositionally biased stretch (basic and acidic residues) spans 1171-1199; sequence MAEEQEKKKLAEETGKSGDKKENKKDADK.

This sequence belongs to the RNA polymerase beta chain family. In terms of assembly, the RNAP catalytic core consists of 2 alpha, 1 beta, 1 beta' and 1 omega subunit. When a sigma factor is associated with the core the holoenzyme is formed, which can initiate transcription.

It carries out the reaction RNA(n) + a ribonucleoside 5'-triphosphate = RNA(n+1) + diphosphate. In terms of biological role, DNA-dependent RNA polymerase catalyzes the transcription of DNA into RNA using the four ribonucleoside triphosphates as substrates. The polypeptide is DNA-directed RNA polymerase subunit beta (Lactobacillus helveticus (strain DPC 4571)).